Here is a 121-residue protein sequence, read N- to C-terminus: Ribosome-binding factor A (121 aa).

The protein belongs to the RbfA family. As to quaternary structure, monomer. Binds 30S ribosomal subunits, but not 50S ribosomal subunits or 70S ribosomes.

It localises to the cytoplasm. One of several proteins that assist in the late maturation steps of the functional core of the 30S ribosomal subunit. Associates with free 30S ribosomal subunits (but not with 30S subunits that are part of 70S ribosomes or polysomes). Required for efficient processing of 16S rRNA. May interact with the 5'-terminal helix region of 16S rRNA. This is Ribosome-binding factor A from Finegoldia magna (strain ATCC 29328 / DSM 20472 / WAL 2508) (Peptostreptococcus magnus).